The sequence spans 157 residues: MTEKKARPIKVVAENRKARFNYSIEDTFEAGVMLTGTEVKSARNGKSTISESYADSKNGEIWLVNANIPEYLQANRFNHEPRRPRKLLLHKRQINKLIGAIEREGMTLIPLKMYFNEQGRLKLELALAKGKKLHDKRETEKKRDWSREKSRLLRARG.

The disordered stretch occupies residues 133–157 (LHDKRETEKKRDWSREKSRLLRARG). Positions 135 to 151 (DKRETEKKRDWSREKSR) are enriched in basic and acidic residues.

The protein belongs to the SmpB family.

It is found in the cytoplasm. Functionally, required for rescue of stalled ribosomes mediated by trans-translation. Binds to transfer-messenger RNA (tmRNA), required for stable association of tmRNA with ribosomes. tmRNA and SmpB together mimic tRNA shape, replacing the anticodon stem-loop with SmpB. tmRNA is encoded by the ssrA gene; the 2 termini fold to resemble tRNA(Ala) and it encodes a 'tag peptide', a short internal open reading frame. During trans-translation Ala-aminoacylated tmRNA acts like a tRNA, entering the A-site of stalled ribosomes, displacing the stalled mRNA. The ribosome then switches to translate the ORF on the tmRNA; the nascent peptide is terminated with the 'tag peptide' encoded by the tmRNA and targeted for degradation. The ribosome is freed to recommence translation, which seems to be the essential function of trans-translation. In Afipia carboxidovorans (strain ATCC 49405 / DSM 1227 / KCTC 32145 / OM5) (Oligotropha carboxidovorans), this protein is SsrA-binding protein.